A 439-amino-acid polypeptide reads, in one-letter code: Guanine deaminase (439 aa).

Zn(2+) contacts are provided by His-82 and His-84. Substrate is bound by residues 84–87 (HYPQ), 209–210 (RF), 237–240 (HLCE), and Asp-327. Positions 237 and 327 each coordinate Zn(2+).

This sequence belongs to the metallo-dependent hydrolases superfamily. ATZ/TRZ family. Zn(2+) serves as cofactor.

The catalysed reaction is guanine + H2O + H(+) = xanthine + NH4(+). Its pathway is purine metabolism; guanine degradation; xanthine from guanine: step 1/1. In terms of biological role, catalyzes the hydrolytic deamination of guanine, producing xanthine and ammonia. In Escherichia coli (strain K12), this protein is Guanine deaminase (guaD).